The primary structure comprises 337 residues: Putative 2-aminoethylphosphonate-binding periplasmic protein (337 aa).

The N-terminal stretch at 1-21 is a signal peptide; that stretch reads MKLSRLALLSVFALASAPSWA.

It belongs to the bacterial solute-binding protein 1 family.

Its subcellular location is the periplasm. Probably part of the PhnSTUV complex (TC 3.A.1.11.5) involved in 2-aminoethylphosphonate import. The polypeptide is Putative 2-aminoethylphosphonate-binding periplasmic protein (phnS) (Salmonella paratyphi A (strain ATCC 9150 / SARB42)).